The chain runs to 219 residues: Factor in the germline alpha (219 aa).

The bHLH domain maps to 65–117 (ERRRVANAKERERIKNLNRGFARLKALVPFLPQSRKPSKVDILKGATEYIQVL). Residues 124–151 (AKDSKKQDPDEQSYSNNSSESHTSSARQ) are disordered. A compositionally biased stretch (low complexity) spans 136-148 (SYSNNSSESHTSS).

As to quaternary structure, heterodimer with TCF3/isoform E12. In terms of tissue distribution, germ cells. Expressed in the fetal ovary, but not by a range of other tissues. Expression increases across mid-gestation, rising some 40-fold by the time of primordial follicle formation.

It localises to the nucleus. Its function is as follows. Germline specific transcription factor implicated in postnatal oocyte-specific gene expression. Plays a key regulatory role in the expression of multiple oocyte-specific genes, including those that initiate folliculogenesis and those that encode the zona pellucida (ZP1, ZP2 and ZP3) required for fertilization and early embryonic survival. Essential for oocytes to survive and form primordial follicles. The persistence of FIGLA in adult females suggests that it may regulate additional pathways that are essential for normal ovarian development. Binds to the E-box (5'-CANNTG-3') of the ZPs (ZP1, ZP2, ZP3) promoters. The sequence is that of Factor in the germline alpha (FIGLA) from Homo sapiens (Human).